Reading from the N-terminus, the 95-residue chain is Small ribosomal subunit protein uS15 (95 aa).

This sequence belongs to the universal ribosomal protein uS15 family. As to quaternary structure, part of the 30S ribosomal subunit. Forms a bridge to the 50S subunit in the 70S ribosome, contacting the 23S rRNA.

One of the primary rRNA binding proteins, it binds directly to 16S rRNA where it helps nucleate assembly of the platform of the 30S subunit by binding and bridging several RNA helices of the 16S rRNA. In terms of biological role, forms an intersubunit bridge (bridge B4) with the 23S rRNA of the 50S subunit in the ribosome. This Streptomyces avermitilis (strain ATCC 31267 / DSM 46492 / JCM 5070 / NBRC 14893 / NCIMB 12804 / NRRL 8165 / MA-4680) protein is Small ribosomal subunit protein uS15.